The following is a 26-amino-acid chain: AMP deaminase 1 (26 aa).

It belongs to the metallo-dependent hydrolases superfamily. Adenosine and AMP deaminases family. As to quaternary structure, homotetramer. Zn(2+) serves as cofactor.

It catalyses the reaction AMP + H2O + H(+) = IMP + NH4(+). It functions in the pathway purine metabolism; IMP biosynthesis via salvage pathway; IMP from AMP: step 1/1. Its function is as follows. AMP deaminase plays a critical role in energy metabolism. The sequence is that of AMP deaminase 1 (AMPD1) from Oryctolagus cuniculus (Rabbit).